The following is a 151-amino-acid chain: MKKIDIKILDPRVGNEFPLPTYATEGSAGLDLRACLDHAVELQPGQTTLLPTGLAIHIGDSALAAVILPRSGLGHKHGIVLGNLVGLIDSDYQGQLMVSVWNRGQQPFTIEPGERIAQMVFVPVVQAEFNLVEDFTDSERGTGGFGHSGRQ.

Residues 70–72 (RSG), N83, 87–89 (LID), and M97 contribute to the substrate site.

Belongs to the dUTPase family. Requires Mg(2+) as cofactor.

It carries out the reaction dUTP + H2O = dUMP + diphosphate + H(+). The protein operates within pyrimidine metabolism; dUMP biosynthesis; dUMP from dCTP (dUTP route): step 2/2. Functionally, this enzyme is involved in nucleotide metabolism: it produces dUMP, the immediate precursor of thymidine nucleotides and it decreases the intracellular concentration of dUTP so that uracil cannot be incorporated into DNA. The chain is Deoxyuridine 5'-triphosphate nucleotidohydrolase from Yersinia pseudotuberculosis serotype O:1b (strain IP 31758).